Here is a 103-residue protein sequence, read N- to C-terminus: Small ribosomal subunit protein bS18 (103 aa).

Positions 1-19 (MSEERTERPERTERPERPQ) are enriched in basic and acidic residues. The segment at 1–33 (MSEERTERPERTERPERPQQRGSGPRKRRPFQR) is disordered. The span at 24–33 (GPRKRRPFQR) shows a compositional bias: basic residues.

The protein belongs to the bacterial ribosomal protein bS18 family. In terms of assembly, part of the 30S ribosomal subunit. Forms a tight heterodimer with protein bS6.

In terms of biological role, binds as a heterodimer with protein bS6 to the central domain of the 16S rRNA, where it helps stabilize the platform of the 30S subunit. The sequence is that of Small ribosomal subunit protein bS18 from Geobacter sulfurreducens (strain ATCC 51573 / DSM 12127 / PCA).